The sequence spans 257 residues: Ras-related protein Rab-26 (257 aa).

Positions 1–53 (MSRKKTPKSKGGSVPAASTLPAAANGPRLAHPRTARPGPEAPPNGPPQSGRPS) are disordered. Positions 73, 74, 75, 76, 77, 78, 79, 96, and 97 each coordinate GTP. Thr-78 provides a ligand contact to Mg(2+). 2 short sequence motifs (switch) span residues 87–102 (GAFL…GIDF) and 120–137 (DTAG…YYRD). 2 residues coordinate Mg(2+): Thr-97 and Asp-120. Residues Gly-123, Asn-178, Lys-179, Asp-181, Ala-209, and Lys-210 each contribute to the GTP site. 2 S-geranylgeranyl cysteine lipidation sites follow: Cys-254 and Cys-255.

This sequence belongs to the small GTPase superfamily. Rab family. In terms of assembly, interacts with ADRA2B. Interacts with RIMS1. It depends on Mg(2+) as a cofactor. In terms of tissue distribution, expressed in pancreas, kidney, brain, submandibular gland, and lung.

It localises to the cytoplasmic vesicle. It is found in the secretory vesicle membrane. Its subcellular location is the golgi apparatus membrane. It carries out the reaction GTP + H2O = GDP + phosphate + H(+). Its activity is regulated as follows. Regulated by guanine nucleotide exchange factors (GEFs) which promote the exchange of bound GDP for free GTP. Regulated by GTPase activating proteins (GAPs) which increase the GTP hydrolysis activity. Inhibited by GDP dissociation inhibitors (GDIs). Functionally, the small GTPases Rab are key regulators of intracellular membrane trafficking, from the formation of transport vesicles to their fusion with membranes. Rabs cycle between an inactive GDP-bound form and an active GTP-bound form that is able to recruit to membranes different set of downstream effectors directly responsible for vesicle formation, movement, tethering and fusion. RAB26 mediates transport of ADRA2A and ADRA2B from the Golgi to the cell membrane. Plays a role in the maturation of zymogenic granules and in pepsinogen secretion in the stomach. Plays a role in the secretion of amylase from acinar granules in the parotid gland. This Rattus norvegicus (Rat) protein is Ras-related protein Rab-26.